Consider the following 960-residue polypeptide: Glycine dehydrogenase (decarboxylating) (960 aa).

Position 709 is an N6-(pyridoxal phosphate)lysine (Lys-709).

Belongs to the GcvP family. The glycine cleavage system is composed of four proteins: P, T, L and H. It depends on pyridoxal 5'-phosphate as a cofactor.

The catalysed reaction is N(6)-[(R)-lipoyl]-L-lysyl-[glycine-cleavage complex H protein] + glycine + H(+) = N(6)-[(R)-S(8)-aminomethyldihydrolipoyl]-L-lysyl-[glycine-cleavage complex H protein] + CO2. Functionally, the glycine cleavage system catalyzes the degradation of glycine. The P protein binds the alpha-amino group of glycine through its pyridoxal phosphate cofactor; CO(2) is released and the remaining methylamine moiety is then transferred to the lipoamide cofactor of the H protein. The protein is Glycine dehydrogenase (decarboxylating) of Edwardsiella ictaluri (strain 93-146).